The primary structure comprises 377 residues: Multiple sugar-binding transport ATP-binding protein MsmK (377 aa).

Positions 4 to 246 constitute an ABC transporter domain; it reads LNLNHIYKKY…PANKFVAGFI (243 aa). 38–45 provides a ligand contact to ATP; it reads GPSGCGKS.

Belongs to the ABC transporter superfamily.

Its subcellular location is the cell membrane. Involved in a binding protein-dependent transport system responsible for the uptake of melibiose, raffinose and isomaltotriose. Probably responsible for energy coupling to the transport system. In Streptococcus mutans serotype c (strain ATCC 700610 / UA159), this protein is Multiple sugar-binding transport ATP-binding protein MsmK (msmK).